We begin with the raw amino-acid sequence, 132 residues long: Replication enhancer protein (132 aa).

This sequence belongs to the geminiviridae replication enhancer protein family. Homooligomer. Interacts with the replication-associated protein (REP). Interacts with host proliferating cell nuclear antigen (PCNA). Interacts with host retinoblastoma-related protein 1 (RBR1), and may thereby deregulate the host cell cycle. Oligomerization and interaction with PCNA are necessary for optimal replication enhancement.

In terms of biological role, increases viral DNA accumulation. Enhances infectivity and symptom expression. This Abutilon (Upland cotton) protein is Replication enhancer protein.